A 430-amino-acid polypeptide reads, in one-letter code: Adenylosuccinate synthetase (430 aa).

GTP-binding positions include 12–18 (GDEGKGK) and 40–42 (GHT). The active-site Proton acceptor is the aspartate 13. Mg(2+) is bound by residues aspartate 13 and glycine 40. IMP is bound by residues 13-16 (DEGK), 38-41 (NAGH), threonine 128, arginine 142, glutamine 223, threonine 238, and arginine 302. Histidine 41 functions as the Proton donor in the catalytic mechanism. Residue 298–304 (TTTGRPR) coordinates substrate. GTP-binding positions include arginine 304, 330 to 332 (SID), and 412 to 414 (SVG).

This sequence belongs to the adenylosuccinate synthetase family. As to quaternary structure, homodimer. Mg(2+) is required as a cofactor.

It localises to the cytoplasm. It carries out the reaction IMP + L-aspartate + GTP = N(6)-(1,2-dicarboxyethyl)-AMP + GDP + phosphate + 2 H(+). It participates in purine metabolism; AMP biosynthesis via de novo pathway; AMP from IMP: step 1/2. Plays an important role in the de novo pathway of purine nucleotide biosynthesis. Catalyzes the first committed step in the biosynthesis of AMP from IMP. In Streptococcus agalactiae serotype Ia (strain ATCC 27591 / A909 / CDC SS700), this protein is Adenylosuccinate synthetase.